A 211-amino-acid chain; its full sequence is Small ribosomal subunit protein uS3 (211 aa).

Positions L38–K106 constitute a KH type-2 domain.

It belongs to the universal ribosomal protein uS3 family. Part of the 30S ribosomal subunit. Forms a tight complex with proteins S10 and S14.

Functionally, binds the lower part of the 30S subunit head. Binds mRNA in the 70S ribosome, positioning it for translation. The chain is Small ribosomal subunit protein uS3 from Ehrlichia ruminantium (strain Welgevonden).